The primary structure comprises 107 residues: U1-lycotoxin-Ls1b (107 aa).

The signal sequence occupies residues 1-20; the sequence is MMKVLVVVALLVTHISYSSS. A propeptide spanning residues 21-41 is cleaved from the precursor; the sequence is EGIDDLEADELLSLMANEQTR. Intrachain disulfides connect C44–C59, C51–C68, C58–C86, and C70–C84.

This sequence belongs to the neurotoxin 19 (CSTX) family. 04 (U1-Lctx) subfamily. As to expression, expressed by the venom gland.

It is found in the secreted. In Lycosa singoriensis (Wolf spider), this protein is U1-lycotoxin-Ls1b.